The primary structure comprises 454 residues: Chromosomal replication initiator protein DnaA (454 aa).

The interval 1-74 (MFDLEKFWDS…IQSAYAYAGI (74 aa)) is domain I, interacts with DnaA modulators. Positions 74–116 (IDIYPVFVVKNGPTPSSERMLEPQPQAKPEKARPQGREFTKDL) are domain II. The interval 88–112 (PSSERMLEPQPQAKPEKARPQGREF) is disordered. A compositionally biased stretch (basic and acidic residues) spans 101-112 (KPEKARPQGREF). A domain III, AAA+ region region spans residues 117–333 (RLNEKYTFEN…GALVKVQAQA (217 aa)). ATP contacts are provided by G161, G163, K164, and T165. Residues 334–454 (TIQKQDINIG…VSDLRQMLER (121 aa)) form a domain IV, binds dsDNA region.

It belongs to the DnaA family. Oligomerizes as a right-handed, spiral filament on DNA at oriC.

It is found in the cytoplasm. Functionally, plays an essential role in the initiation and regulation of chromosomal replication. ATP-DnaA binds to the origin of replication (oriC) to initiate formation of the DNA replication initiation complex once per cell cycle. Binds the DnaA box (a 9 base pair repeat at the origin) and separates the double-stranded (ds)DNA. Forms a right-handed helical filament on oriC DNA; dsDNA binds to the exterior of the filament while single-stranded (ss)DNA is stabiized in the filament's interior. The ATP-DnaA-oriC complex binds and stabilizes one strand of the AT-rich DNA unwinding element (DUE), permitting loading of DNA polymerase. After initiation quickly degrades to an ADP-DnaA complex that is not apt for DNA replication. Binds acidic phospholipids. This is Chromosomal replication initiator protein DnaA from Lactobacillus delbrueckii subsp. bulgaricus (strain ATCC 11842 / DSM 20081 / BCRC 10696 / JCM 1002 / NBRC 13953 / NCIMB 11778 / NCTC 12712 / WDCM 00102 / Lb 14).